A 147-amino-acid chain; its full sequence is Lysozyme C, intestinal isozyme (147 aa).

The signal sequence occupies residues 1 to 18 (MKAVLILGLLLLSVTVQG). Residues 19 to 147 (KKFEKCELAR…VSSYIRGCKL (129 aa)) form the C-type lysozyme domain. Intrachain disulfides connect C24/C145, C48/C133, C83/C99, and C95/C113. Active-site residues include E53 and D71.

Belongs to the glycosyl hydrolase 22 family.

It catalyses the reaction Hydrolysis of (1-&gt;4)-beta-linkages between N-acetylmuramic acid and N-acetyl-D-glucosamine residues in a peptidoglycan and between N-acetyl-D-glucosamine residues in chitodextrins.. Its function is as follows. Lysozymes have primarily a bacteriolytic function; those in tissues and body fluids are associated with the monocyte-macrophage system and enhance the activity of immunoagents. In Bos taurus (Bovine), this protein is Lysozyme C, intestinal isozyme.